The chain runs to 121 residues: Large ribosomal subunit protein uL18 (121 aa).

Belongs to the universal ribosomal protein uL18 family. Part of the 50S ribosomal subunit; part of the 5S rRNA/L5/L18/L25 subcomplex. Contacts the 5S and 23S rRNAs.

This is one of the proteins that bind and probably mediate the attachment of the 5S RNA into the large ribosomal subunit, where it forms part of the central protuberance. The sequence is that of Large ribosomal subunit protein uL18 from Herpetosiphon aurantiacus (strain ATCC 23779 / DSM 785 / 114-95).